The sequence spans 455 residues: tRNA modification GTPase MnmE (455 aa).

R22 contacts (6S)-5-formyl-5,6,7,8-tetrahydrofolate. Positions 43-67 are disordered; it reads RRATRAALRSPPSGPGPTGPGPEEG. Residues E92 and R132 each coordinate (6S)-5-formyl-5,6,7,8-tetrahydrofolate. The 154-residue stretch at 228–381 folds into the TrmE-type G domain; the sequence is GLQVAVVGAP…LEAALESRAR (154 aa). Residue N238 coordinates K(+). GTP contacts are provided by residues 238–243, 257–263, and 282–285; these read NVGKSS, SDIAGTT, and DTAG. S242 provides a ligand contact to Mg(2+). Residues S257, I259, and T262 each coordinate K(+). T263 contacts Mg(2+). Position 455 (K455) interacts with (6S)-5-formyl-5,6,7,8-tetrahydrofolate.

The protein belongs to the TRAFAC class TrmE-Era-EngA-EngB-Septin-like GTPase superfamily. TrmE GTPase family. In terms of assembly, homodimer. Heterotetramer of two MnmE and two MnmG subunits. K(+) is required as a cofactor.

It is found in the cytoplasm. In terms of biological role, exhibits a very high intrinsic GTPase hydrolysis rate. Involved in the addition of a carboxymethylaminomethyl (cmnm) group at the wobble position (U34) of certain tRNAs, forming tRNA-cmnm(5)s(2)U34. The polypeptide is tRNA modification GTPase MnmE (Rhodospirillum rubrum (strain ATCC 11170 / ATH 1.1.1 / DSM 467 / LMG 4362 / NCIMB 8255 / S1)).